Reading from the N-terminus, the 483-residue chain is Glutarate-semialdehyde dehydrogenase (483 aa).

NADP(+)-binding positions include W156 to N157, K180 to S183, and G233 to S234. Residue E255 is the Proton acceptor of the active site. L256 serves as a coordination point for NADP(+). Residue C289 is the Nucleophile of the active site. NADP(+) is bound at residue E386.

It belongs to the aldehyde dehydrogenase family.

The catalysed reaction is 5-oxopentanoate + NADP(+) + H2O = glutarate + NADPH + 2 H(+). It participates in amino-acid degradation. Functionally, catalyzes the conversion of 5-oxopentanoate (glutarate semialdehyde) to glutarate. Involved in L-lysine degradation. This chain is Glutarate-semialdehyde dehydrogenase, found in Pseudomonas aeruginosa (strain ATCC 15692 / DSM 22644 / CIP 104116 / JCM 14847 / LMG 12228 / 1C / PRS 101 / PAO1).